The following is a 137-amino-acid chain: Large-conductance mechanosensitive channel (137 aa).

A run of 2 helical transmembrane segments spans residues 16-36 and 83-103; these read VIDL…VDSI and GNFI…FLMI.

The protein belongs to the MscL family. In terms of assembly, homopentamer.

Its subcellular location is the cell inner membrane. Its function is as follows. Channel that opens in response to stretch forces in the membrane lipid bilayer. May participate in the regulation of osmotic pressure changes within the cell. This chain is Large-conductance mechanosensitive channel, found in Methylibium petroleiphilum (strain ATCC BAA-1232 / LMG 22953 / PM1).